The chain runs to 353 residues: MNNLLDFTLEELKAWMKENGESAFRGQQILSWIYKGVKEFDNMKNIPKPLVQKLKENFFVGLPKIIEVYKSNIDGTEKFLLGFKDGNLIESVLMRYKHGNSICISTQVGCAMGCKFCASTIEGKVRNLTTGEILSQIMVVQDYINERISNVVLMGSGEPLDNYNNVIKFLEIVSAEYALNIGQRHITLSTCGIVPKIYELADKELSITLALSLHAFSNDKRKEIMPIANRYSIEEILEACRYYINKTNRRITFEYALVKDVNDGREDAKALGKLLKGMLCHVNLIPVNEIKENTYKRSSKKAIEDFSEILKNHGIEVTTRREMGSDINAACGQLRRSYINTQEIEGEQNGRFS.

The Proton acceptor role is filled by E90. The Radical SAM core domain occupies 96–326 (YKHGNSICIS…VTTRREMGSD (231 aa)). A disulfide bridge connects residues C103 and C331. [4Fe-4S] cluster is bound by residues C110, C114, and C117. S-adenosyl-L-methionine-binding positions include 157-158 (GE), S189, 212-214 (SLH), and N288. C331 acts as the S-methylcysteine intermediate in catalysis.

It belongs to the radical SAM superfamily. RlmN family. [4Fe-4S] cluster is required as a cofactor.

The protein resides in the cytoplasm. It catalyses the reaction adenosine(2503) in 23S rRNA + 2 reduced [2Fe-2S]-[ferredoxin] + 2 S-adenosyl-L-methionine = 2-methyladenosine(2503) in 23S rRNA + 5'-deoxyadenosine + L-methionine + 2 oxidized [2Fe-2S]-[ferredoxin] + S-adenosyl-L-homocysteine. The enzyme catalyses adenosine(37) in tRNA + 2 reduced [2Fe-2S]-[ferredoxin] + 2 S-adenosyl-L-methionine = 2-methyladenosine(37) in tRNA + 5'-deoxyadenosine + L-methionine + 2 oxidized [2Fe-2S]-[ferredoxin] + S-adenosyl-L-homocysteine. Its function is as follows. Specifically methylates position 2 of adenine 2503 in 23S rRNA and position 2 of adenine 37 in tRNAs. The sequence is that of Probable dual-specificity RNA methyltransferase RlmN from Clostridium beijerinckii (strain ATCC 51743 / NCIMB 8052) (Clostridium acetobutylicum).